Reading from the N-terminus, the 420-residue chain is Acetyl-CoA acetyltransferase, mitochondrial (420 aa).

Residues 1-26 (MTSRALYSTRSQLCRHLAHKYLSRSY) constitute a mitochondrion transit peptide. The active-site Acyl-thioester intermediate is the cysteine 119. Residues tyrosine 212, 251-253 (KVD), and lysine 256 contribute to the CoA site. Position 212 (tyrosine 212) interacts with K(+). Alanine 273, alanine 274, and alanine 276 together coordinate K(+). Serine 277 serves as a coordination point for CoA. Valine 374 is a K(+) binding site. Residue cysteine 406 is the Proton donor/acceptor of the active site.

Belongs to the thiolase-like superfamily. Thiolase family. In terms of assembly, homotetramer.

It is found in the mitochondrion. The enzyme catalyses 2 acetyl-CoA = acetoacetyl-CoA + CoA. It carries out the reaction propanoyl-CoA + acetyl-CoA = 2-methyl-3-oxobutanoyl-CoA + CoA. The protein operates within lipid metabolism; fatty acid beta-oxidation. This is one of the enzymes that catalyzes the last step of the mitochondrial beta-oxidation pathway, an aerobic process breaking down fatty acids into acetyl-CoA. Using free coenzyme A/CoA, catalyzes the thiolytic cleavage of medium- to long-chain 3-oxoacyl-CoAs into acetyl-CoA and a fatty acyl-CoA shortened by two carbon atoms. The activity of the enzyme is reversible and it can also catalyze the condensation of two acetyl-CoA molecules into acetoacetyl-CoA. Thereby, it plays a major role in ketone body metabolism. The sequence is that of Acetyl-CoA acetyltransferase, mitochondrial (acat1) from Danio rerio (Zebrafish).